The chain runs to 380 residues: G-protein coupled receptor (380 aa).

7 helical membrane-spanning segments follow: residues 26–46, 60–80, 97–117, 145–165, 184–204, 220–240, and 275–295; these read VISI…YLGI, LVCC…PLWV, FAGM…VIVT, VTIL…ETSI, AALG…HIIL, ILMW…SLSA, and VAML…VPLI. A disulfide bridge connects residues cysteine 95 and cysteine 170. Positions 328 to 380 are disordered; that stretch reads SQSKLLRGEENPNYDYSPKSVRIKPLKSPGGGDNSSLKDEGYDEESQNGFSIG.

It belongs to the G-protein coupled receptor 1 family.

It localises to the host membrane. This is G-protein coupled receptor from Elephas maximus (Indian elephant).